A 678-amino-acid chain; its full sequence is DNA ligase (678 aa).

Residues 35–39 (DSVYD), 84–85 (SL), and E116 contribute to the NAD(+) site. The N6-AMP-lysine intermediate role is filled by K118. NAD(+) is bound by residues R139, E178, K297, and K321. Zn(2+)-binding residues include C415, C418, C433, and C438. The BRCT domain maps to 600 to 678 (DGNQIFAGKT…EAQLLEMLNE (79 aa)).

The protein belongs to the NAD-dependent DNA ligase family. LigA subfamily. The cofactor is Mg(2+). It depends on Mn(2+) as a cofactor.

The catalysed reaction is NAD(+) + (deoxyribonucleotide)n-3'-hydroxyl + 5'-phospho-(deoxyribonucleotide)m = (deoxyribonucleotide)n+m + AMP + beta-nicotinamide D-nucleotide.. DNA ligase that catalyzes the formation of phosphodiester linkages between 5'-phosphoryl and 3'-hydroxyl groups in double-stranded DNA using NAD as a coenzyme and as the energy source for the reaction. It is essential for DNA replication and repair of damaged DNA. The sequence is that of DNA ligase from Nostoc punctiforme (strain ATCC 29133 / PCC 73102).